A 687-amino-acid polypeptide reads, in one-letter code: Chloride channel protein ClC-Kb (687 aa).

Over 1 to 50 the chain is Cytoplasmic; it reads MEEIVGLREGSPRKPVPLQELWRPCPRIRRNIQGSLEWLKERLFRVGEDW. The next 2 helical transmembrane spans lie at 51 to 82 and 91 to 111; these read YFLV…KWLY and LRYL…SGFS. An intramembrane region (helical) is located at residues 116 to 127; it reads PSSGGSGIPEVK. S121 provides a ligand contact to chloride. The next 2 helical transmembrane spans lie at 141–160 and 161–180; these read IKNF…TGST and IFLG…AAYL. N193 is a glycosylation site (N-linked (GlcNAc...) asparagine). Residues 203–224 constitute an intramembrane region (helical); sequence AGAAVGVATVFAAPISGVLFSI. Residues 236 to 255 traverse the membrane as a helical segment; it reads YWRGFFAATCGAFMFHLLAV. E259, E261, D278, and E281 together coordinate Ca(2+). Helical transmembrane passes span 282–310 and 325–342; these read IFFF…LFFL and PLYS…TYPP. The helical intramembrane region spans 349 to 360; that stretch reads ASRLSMSEYLET. Transmembrane regions (helical) follow at residues 400–420 and 421–440; these read GTLV…TTIP and IPAG…GRLF. F426 contributes to the chloride binding site. Positions 464–496 form an intramembrane region, helical; sequence GAYALAGAAAFSGAVTHTLSTALLAFEVSGQIV. Residues 500-520 traverse the membrane as a helical segment; it reads PVLMAVLAANAICQSYQPSFY. Over 521–687 the chain is Cytoplasmic; that stretch reads DGTIIVKKLP…STLTNPPAPK (167 aa). CBS domains follow at residues 551-609 and 626-687; these read MNCT…DSAS and CPTQ…PAPK.

This sequence belongs to the chloride channel (TC 2.A.49) family. CLCNKB subfamily. Homodimer. Interacts with BSND. In terms of processing, N-glycosylated. As to expression, expressed predominantly in the kidney. Expressed in all segments of the nephron examined, including the S2 segment and the glomerulus.

The protein resides in the basolateral cell membrane. The catalysed reaction is chloride(in) = chloride(out). It catalyses the reaction iodide(out) = iodide(in). The enzyme catalyses nitrate(in) = nitrate(out). It carries out the reaction bromide(in) = bromide(out). In terms of biological role, anion-selective channel permeable to small monovalent anions with ion selectivity for chloride &gt; bromide &gt; nitrate &gt; iodide. Forms a homodimeric channel where each subunit has its own ion conduction pathway. May conduct double-barreled currents controlled by two types of gates, two fast gates that control each subunit independently and a slow common gate that opens and shuts off both subunits simultaneously. Assembles with the regulatory subunit BSND/Barttin for sorting at the basolateral plasma membrane domain and functional switch to the ion conducting state. CLCNKB:BSND channels display mostly a linear current-voltage relationship controlled by common gate. Mediates chloride conductance along nephron segments, namely the thick ascending limb of Henle's loop, convoluted tubule and the collecting duct, contributing to the maintenance of systemic acid-base and electrolyte homeostasis. Conducts chloride currents in the stria vascularis of the inner ear to establish the endocochlear potential necessary for normal hearing. This chain is Chloride channel protein ClC-Kb, found in Rattus norvegicus (Rat).